A 768-amino-acid chain; its full sequence is Cullin-3 (768 aa).

S2 is subject to N-acetylserine. The interaction with KLHL18 stretch occupies residues 2-41 (SNLSKGTGSRKDTKMRIRAFPMTMDEKYVNSIWDLLKNAI). S585 bears the Phosphoserine mark. A disordered region spans residues 677-698 (VAAKQGESDPERKETRQKVDDD). Positions 682-698 (GESDPERKETRQKVDDD) are enriched in basic and acidic residues. The Cullin neddylation domain occupies 698–760 (DRKHEIEAAI…REYLARTPED (63 aa)). Residue K712 forms a Glycyl lysine isopeptide (Lys-Gly) (interchain with G-Cter in NEDD8) linkage.

Belongs to the cullin family. As to quaternary structure, forms neddylation-dependent homodimers. Component of multiple BCR (BTB-CUL3-RBX1) E3 ubiquitin-protein ligase complexes formed of CUL3, RBX1 and a variable BTB domain-containing protein acting as both, adapter to cullin and substrate recognition subunit. The BCR complex may be active as a heterodimeric complex, in which NEDD8, covalently attached to one CUL3 molecule, binds to the C-terminus of a second CUL3 molecule. Interacts with RBX1, RNF7, CYCE and TIP120A/CAND1. Part of the BCR(SPOP) containing SPOP, and of BCR containing homodimeric SPOPL or the heterodimer formed by SPOP and SPOPL. Part of the probable BCR(KLHL9-KLHL13) complex with BTB domain proteins KLHL9 and KLHL13. Part of the BCR(KLHL41) complex containing KLHL41. Component of the BCR(KLHL12) E3 ubiquitin ligase complex, at least composed of CUL3 and KLHL12 and RBX1. Component of the BCR(KLHL3) E3 ubiquitin ligase complex, at least composed of CUL3 and KLHL3 and RBX1. Part of the BCR(ENC1) complex containing ENC1. Part of a complex consisting of BMI1/PCGF4, CUL3 and SPOP. Part of a complex consisting of BRMS1, CUL3 and SPOP. Component of the BCR(KLHL21) E3 ubiquitin ligase complex, at least composed of CUL3, KLHL21 and RBX1. Component of the BCR(KLHL22) E3 ubiquitin ligase complex, at least composed of CUL3, KLHL22 and RBX1. Component of the BCR(KLHL25) E3 ubiquitin ligase complex, at least composed of CUL3, KLHL25 and RBX1. Part of a complex consisting of MACROH2A1, CUL3 and SPOP. Component of the BCR(KLHL42) E3 ubiquitin ligase complex, at least composed of CUL3 and KLHL42. Component of the BCR(KBTBD8) E3 ubiquitin ligase complex, at least composed of CUL3, KBTBD8 and RBX1. Interacts with KLHL42 (via the BTB domain). Interacts with KATNA1; the interaction is enhanced by KLHL42. Interacts with KCTD5, KLHL9, KLHL11, KLHL13, GAN, ZBTB16, KLHL3, KLHL15, KLHL20, KLHL36, GMCL2, BTBD1. Part of a complex that contains CUL3, RBX1 and GAN. Interacts (via BTB domain) with KLHL17; the interaction regulates surface GRIK2 expression. Interacts with KCTD7. Part of the BCR(GAN) complex containing GAN. Part of the BCR(KEAP1) complex containing KEAP1. vInteracts with KLHL10. Interacts with KAT5 and ATF2. Interacts with KCTD17 in the BCR(KCTD17) E3 ubiquitin ligase complex, at least composed of CUL3, KCTD17 and RBX1. Interacts (when neddylated) with ARIH1; leading to activate the E3 ligase activity of ARIH1. Interacts with COPS9. Interacts with PPP2R5B; this interaction is indirect and mediated through KLHL15-binding and leads to PPP2R5B proteasomal degradation. Interacts with RBBP8/CtIP; this interaction is indirect and mediated through KLHL15-binding and leads to RBBP8 proteasomal degradation. Interacts with KLHL24 in the BCR(KLHL24) E3 ubiquitin ligase complex, composed of CUL3, RBX1 and KLHL24. Interacts with RHOBTB2. Interacts (via BTB domain) with KLHL17; the interaction regulates surface GRIK2 expression. Interacts with AURKA and KLHL18 (via BTB domain). Interacts (unneddylated form) with DCUN1D1, DCUN1D2, DCUN1D3, DCUN1D4 and DCUN1D5; these interactions promote the cullin neddylation. Component of a BCR3 (BTB-CUL3-RBX1) E3 ubiquitin ligase complex, also named Cul3-RING ubiquitin ligase complex CUL3(KBTBD6/7), composed of CUL3, RBX1, KBTBD6 and KBTBD7. Component of the BCR(KBTBD2) E3 ubiquitin ligase complex, at least composed of CUL3, KBTBD2 and RBX1. Interacts with KBTBD2 (via the BTB domain). Component of the BCR(KBTBD4) E3 ubiquitin ligase complex, at least composed of CUL3, KBTBD4 and RBX1. In terms of processing, neddylated. Attachment of NEDD8 is required for the E3 ubiquitin-protein ligase activity of the BCR complex. Deneddylated via its interaction with the COP9 signalosome (CSN) complex.

The protein localises to the nucleus. The protein resides in the golgi apparatus. It localises to the cell projection. Its subcellular location is the cilium. It is found in the flagellum. The protein localises to the cytoplasm. The protein resides in the cytoskeleton. It localises to the spindle. Its subcellular location is the microtubule organizing center. It is found in the centrosome. The protein localises to the spindle pole. It participates in protein modification; protein ubiquitination. Core component of multiple cullin-RING-based BCR (BTB-CUL3-RBX1) E3 ubiquitin-protein ligase complexes which mediate the ubiquitination and subsequent proteasomal degradation of target proteins. BCR complexes and ARIH1 collaborate in tandem to mediate ubiquitination of target proteins. As a scaffold protein may contribute to catalysis through positioning of the substrate and the ubiquitin-conjugating enzyme. The E3 ubiquitin-protein ligase activity of the complex is dependent on the neddylation of the cullin subunit and is inhibited by the association of the deneddylated cullin subunit with TIP120A/CAND1. The functional specificity of the BCR complex depends on the BTB domain-containing protein as the substrate recognition component. BCR(KLHL42) is involved in ubiquitination of KATNA1. BCR(SPOP) is involved in ubiquitination of BMI1/PCGF4, BRMS1, MACROH2A1 and DAXX, GLI2 and GLI3. Can also form a cullin-RING-based BCR (BTB-CUL3-RBX1) E3 ubiquitin-protein ligase complex containing homodimeric SPOPL or the heterodimer formed by SPOP and SPOPL; these complexes have lower ubiquitin ligase activity. BCR(KLHL9-KLHL13) controls the dynamic behavior of AURKB on mitotic chromosomes and thereby coordinates faithful mitotic progression and completion of cytokinesis. BCR(KLHL12) is involved in ER-Golgi transport by regulating the size of COPII coats, thereby playing a key role in collagen export, which is required for embryonic stem (ES) cells division: BCR(KLHL12) acts by mediating monoubiquitination of SEC31 (SEC31A or SEC31B). BCR(KLHL3) acts as a regulator of ion transport in the distal nephron; by mediating ubiquitination of WNK4. The BCR(KLHL20) E3 ubiquitin ligase complex is involved in interferon response and anterograde Golgi to endosome transport: it mediates both ubiquitination leading to degradation and 'Lys-33'-linked ubiquitination. The BCR(KLHL21) E3 ubiquitin ligase complex regulates localization of the chromosomal passenger complex (CPC) from chromosomes to the spindle midzone in anaphase and mediates the ubiquitination of AURKB. The BCR(KLHL22) ubiquitin ligase complex mediates monoubiquitination of PLK1, leading to PLK1 dissociation from phosphoreceptor proteins and subsequent removal from kinetochores, allowing silencing of the spindle assembly checkpoint (SAC) and chromosome segregation. The BCR(KLHL22) ubiquitin ligase complex is also responsible for the amino acid-stimulated 'Lys-48' polyubiquitination and proteasomal degradation of DEPDC5. Through the degradation of DEPDC5, releases the GATOR1 complex-mediated inhibition of the TORC1 pathway. The BCR(KLHL25) ubiquitin ligase complex is involved in translational homeostasis by mediating ubiquitination and subsequent degradation of hypophosphorylated EIF4EBP1 (4E-BP1). The BCR(KLHL25) ubiquitin ligase complex is also involved in lipid synthesis by mediating ubiquitination and degradation of ACLY. The BCR(KBTBD8) complex acts by mediating monoubiquitination of NOLC1 and TCOF1, leading to remodel the translational program of differentiating cells in favor of neural crest specification. Involved in ubiquitination of cyclin E and of cyclin D1 (in vitro) thus involved in regulation of G1/S transition. Involved in the ubiquitination of KEAP1, ENC1 and KLHL41. In concert with ATF2 and RBX1, promotes degradation of KAT5 thereby attenuating its ability to acetylate and activate ATM. The BCR(KCTD17) E3 ubiquitin ligase complex mediates ubiquitination and degradation of TCHP, a down-regulator of cilium assembly, thereby inducing ciliogenesis. The BCR(KLHL24) E3 ubiquitin ligase complex mediates ubiquitination of KRT14, controls KRT14 levels during keratinocytes differentiation, and is essential for skin integrity. The BCR(KLHL18) E3 ubiquitin ligase complex mediates the ubiquitination of AURKA leading to its activation at the centrosome which is required for initiating mitotic entry. The BCR(KEAP1) E3 ubiquitin ligase complex acts as a key sensor of oxidative and electrophilic stress by mediating ubiquitination and degradation of NFE2L2/NRF2, a transcription factor regulating expression of many cytoprotective genes. As part of the CUL3(KBTBD6/7) E3 ubiquitin ligase complex functions mediates 'Lys-48' ubiquitination and proteasomal degradation of TIAM1. By controlling the ubiquitination of that RAC1 guanine exchange factors (GEF), regulates RAC1 signal transduction and downstream biological processes including the organization of the cytoskeleton, cell migration and cell proliferation. The BCR(KBTBD4) E3 ubiquitin ligase complex targets CoREST corepressor complex components RCOR1, KDM1A/LSD1 and HDAC2 for proteasomal degradation with RCOR1 likely to be the primary target while degradation of KDM1A and HDAC2 is likely due to their association with RCOR1. It also targets RCOR3, MIER2 and MIER3 for proteasomal degradation as well as associated proteins ZNF217 and RREB1 with degradation being dependent on the presence of an ELM2 domain in the target proteins. The BCR(ARMC5) complex mediates premature transcription termination of transcripts that are unfavorably configured for transcriptional elongation by mediating ubiquitination of Pol II subunit POLR2A. Required for 'Lys-63'-linked ubiquitination of large ribosomal subunit protein MRPL12. This is Cullin-3 (Cul3) from Rattus norvegicus (Rat).